The primary structure comprises 92 residues: Large ribosomal subunit protein bL27 (92 aa).

The segment at 1 to 22 (MAHTKAGGSTRNGRDSRGQRLG) is disordered.

The protein belongs to the bacterial ribosomal protein bL27 family.

The polypeptide is Large ribosomal subunit protein bL27 (Mycoplasmopsis agalactiae (strain NCTC 10123 / CIP 59.7 / PG2) (Mycoplasma agalactiae)).